A 303-amino-acid chain; its full sequence is Catechol 1,2-dioxygenase (303 aa).

4 residues coordinate Fe cation: Tyr-156, Tyr-191, His-215, and His-217.

Homodimer. The cofactor is Fe(3+).

The enzyme catalyses catechol + O2 = cis,cis-muconate + 2 H(+). It participates in aromatic compound metabolism; beta-ketoadipate pathway; 5-oxo-4,5-dihydro-2-furylacetate from catechol: step 1/3. With respect to regulation, inhibited by Ag(+), Cu(+), Hg(2+) and Pb(2+). In terms of biological role, can cleave 4-methylcatechol at lower rates than catechol, but has no activity with 3-methylcatechol, 4-chlorocatechol, 4-carboxycatechol or hydroxyquinol. This is Catechol 1,2-dioxygenase (HQD2) from Candida albicans (strain SC5314 / ATCC MYA-2876) (Yeast).